We begin with the raw amino-acid sequence, 59 residues long: Preprotein translocase subunit SecG (59 aa).

Residues 1 to 35 are Cytoplasmic-facing; the sequence is MPSSKKKKEDVPIASMAGLVRYYESEKEKVKISPK. The helical transmembrane segment at 36–56 threads the bilayer; the sequence is VVVVASIVLIAGVIIASFIIP. Over 57 to 59 the chain is Extracellular; that stretch reads PPL.

It belongs to the SEC61-beta family. Component of the protein translocase complex. Heterotrimer consisting of alpha (SecY), beta (SecG) and gamma (SecE) subunits. Can form oligomers of the heterotrimer.

Its subcellular location is the cell membrane. Functionally, involved in protein export. The function of the beta subunit is unknown, but it may be involved in stabilization of the trimeric complex. This is Preprotein translocase subunit SecG from Sulfolobus acidocaldarius (strain ATCC 33909 / DSM 639 / JCM 8929 / NBRC 15157 / NCIMB 11770).